Here is a 266-residue protein sequence, read N- to C-terminus: Thiazole synthase (266 aa).

K107 acts as the Schiff-base intermediate with DXP in catalysis. 1-deoxy-D-xylulose 5-phosphate-binding positions include G168, A194–G195, and N216–T217.

This sequence belongs to the ThiG family. As to quaternary structure, homotetramer. Forms heterodimers with either ThiH or ThiS.

Its subcellular location is the cytoplasm. It carries out the reaction [ThiS sulfur-carrier protein]-C-terminal-Gly-aminoethanethioate + 2-iminoacetate + 1-deoxy-D-xylulose 5-phosphate = [ThiS sulfur-carrier protein]-C-terminal Gly-Gly + 2-[(2R,5Z)-2-carboxy-4-methylthiazol-5(2H)-ylidene]ethyl phosphate + 2 H2O + H(+). It functions in the pathway cofactor biosynthesis; thiamine diphosphate biosynthesis. Its function is as follows. Catalyzes the rearrangement of 1-deoxy-D-xylulose 5-phosphate (DXP) to produce the thiazole phosphate moiety of thiamine. Sulfur is provided by the thiocarboxylate moiety of the carrier protein ThiS. In vitro, sulfur can be provided by H(2)S. This Azorhizobium caulinodans (strain ATCC 43989 / DSM 5975 / JCM 20966 / LMG 6465 / NBRC 14845 / NCIMB 13405 / ORS 571) protein is Thiazole synthase.